We begin with the raw amino-acid sequence, 137 residues long: UBAP1-MVB12-associated (UMA)-domain containing protein 1 (137 aa).

Positions 1–72 (MFHFFRKPPE…VSDPEMENKA (72 aa)) are disordered. The span at 32–44 (DEQRMTARGKTSD) shows a compositional bias: basic and acidic residues. The segment covering 50–63 (PLETNKENSSSVTV) has biased composition (polar residues). The UMA domain occupies 86–134 (LSDVPFTLAPHVLAVQGTITDLPDHLLSYDGSENLSRFWYDFTLENSVL).

In Homo sapiens (Human), this protein is UBAP1-MVB12-associated (UMA)-domain containing protein 1.